The chain runs to 1067 residues: Probable isoleucine--tRNA ligase, cytoplasmic (1067 aa).

The 'HIGH' region motif lies at 47-57; that stretch reads PFATGLPHYGH. The short motif at 604-608 is the 'KMSKS' region element; the sequence is KMSKR. Lys607 contacts ATP.

Belongs to the class-I aminoacyl-tRNA synthetase family.

The protein resides in the cytoplasm. It catalyses the reaction tRNA(Ile) + L-isoleucine + ATP = L-isoleucyl-tRNA(Ile) + AMP + diphosphate. The polypeptide is Probable isoleucine--tRNA ligase, cytoplasmic (ileS) (Dictyostelium discoideum (Social amoeba)).